Consider the following 343-residue polypeptide: Lipase chaperone (343 aa).

A helical transmembrane segment spans residues 7–27 (IYLGIGLVALLMIFIYWLMPK).

This sequence belongs to the lipase chaperone family.

Its subcellular location is the cell inner membrane. Functionally, may be involved in the folding of the extracellular lipase during its passage through the periplasm. The polypeptide is Lipase chaperone (lifO) (Acinetobacter baylyi (strain ATCC 33305 / BD413 / ADP1)).